Consider the following 82-residue polypeptide: Small ribosomal subunit protein uS17 (82 aa).

This sequence belongs to the universal ribosomal protein uS17 family. In terms of assembly, part of the 30S ribosomal subunit.

Its function is as follows. One of the primary rRNA binding proteins, it binds specifically to the 5'-end of 16S ribosomal RNA. The polypeptide is Small ribosomal subunit protein uS17 (Rhodopseudomonas palustris (strain TIE-1)).